Here is a 504-residue protein sequence, read N- to C-terminus: Glycerol kinase (504 aa).

Threonine 12 contacts ADP. ATP-binding residues include threonine 12, threonine 13, and serine 14. Threonine 12 is a sn-glycerol 3-phosphate binding site. Arginine 16 lines the ADP pocket. Sn-glycerol 3-phosphate contacts are provided by arginine 82, glutamate 83, tyrosine 134, and aspartate 249. Positions 82, 83, 134, 249, and 250 each coordinate glycerol. 2 residues coordinate ADP: threonine 271 and glycine 315. 4 residues coordinate ATP: threonine 271, glycine 315, glutamine 319, and glycine 416. 2 residues coordinate ADP: glycine 416 and asparagine 420.

It belongs to the FGGY kinase family.

The catalysed reaction is glycerol + ATP = sn-glycerol 3-phosphate + ADP + H(+). It participates in polyol metabolism; glycerol degradation via glycerol kinase pathway; sn-glycerol 3-phosphate from glycerol: step 1/1. Its activity is regulated as follows. Inhibited by fructose 1,6-bisphosphate (FBP). Functionally, key enzyme in the regulation of glycerol uptake and metabolism. Catalyzes the phosphorylation of glycerol to yield sn-glycerol 3-phosphate. In Mycobacteroides abscessus (strain ATCC 19977 / DSM 44196 / CCUG 20993 / CIP 104536 / JCM 13569 / NCTC 13031 / TMC 1543 / L948) (Mycobacterium abscessus), this protein is Glycerol kinase.